Consider the following 235-residue polypeptide: Ubiquinone/menaquinone biosynthesis C-methyltransferase UbiE (235 aa).

Thr59, Asp84, and Ser123 together coordinate S-adenosyl-L-methionine.

Belongs to the class I-like SAM-binding methyltransferase superfamily. MenG/UbiE family.

It catalyses the reaction a 2-demethylmenaquinol + S-adenosyl-L-methionine = a menaquinol + S-adenosyl-L-homocysteine + H(+). The enzyme catalyses a 2-methoxy-6-(all-trans-polyprenyl)benzene-1,4-diol + S-adenosyl-L-methionine = a 5-methoxy-2-methyl-3-(all-trans-polyprenyl)benzene-1,4-diol + S-adenosyl-L-homocysteine + H(+). It functions in the pathway quinol/quinone metabolism; menaquinone biosynthesis; menaquinol from 1,4-dihydroxy-2-naphthoate: step 2/2. It participates in cofactor biosynthesis; ubiquinone biosynthesis. In terms of biological role, methyltransferase required for the conversion of demethylmenaquinol (DMKH2) to menaquinol (MKH2) and the conversion of 2-polyprenyl-6-methoxy-1,4-benzoquinol (DDMQH2) to 2-polyprenyl-3-methyl-6-methoxy-1,4-benzoquinol (DMQH2). The sequence is that of Ubiquinone/menaquinone biosynthesis C-methyltransferase UbiE from Campylobacter jejuni subsp. jejuni serotype O:6 (strain 81116 / NCTC 11828).